A 478-amino-acid chain; its full sequence is Pyrrolysine--tRNA ligase (478 aa).

The segment at 106–188 is disordered; the sequence is VMPKSVARTP…TSAMPASTSA (83 aa). Polar residues predominate over residues 122 to 132; that stretch reads APVQTLPSESQ. The span at 133–188 shows a compositional bias: low complexity; that stretch reads PAPTTPISASTTAPASTSTTAPAPASTTAPAPASTTAPASASTTISTSAMPASTSA.

This sequence belongs to the class-II aminoacyl-tRNA synthetase family.

The protein resides in the cytoplasm. The catalysed reaction is tRNA(Pyl) + L-pyrrolysine + ATP = L-pyrrolysyl-tRNA(Pyl) + AMP + diphosphate. Functionally, catalyzes the attachment of pyrrolysine to tRNA(Pyl). Pyrrolysine is a lysine derivative encoded by the termination codon UAG. The polypeptide is Pyrrolysine--tRNA ligase (Methanosarcina thermophila).